Here is a 213-residue protein sequence, read N- to C-terminus: ATP phosphoribosyltransferase (213 aa).

It belongs to the ATP phosphoribosyltransferase family. Short subfamily. Heteromultimer composed of HisG and HisZ subunits.

The protein resides in the cytoplasm. It catalyses the reaction 1-(5-phospho-beta-D-ribosyl)-ATP + diphosphate = 5-phospho-alpha-D-ribose 1-diphosphate + ATP. It participates in amino-acid biosynthesis; L-histidine biosynthesis; L-histidine from 5-phospho-alpha-D-ribose 1-diphosphate: step 1/9. Catalyzes the condensation of ATP and 5-phosphoribose 1-diphosphate to form N'-(5'-phosphoribosyl)-ATP (PR-ATP). Has a crucial role in the pathway because the rate of histidine biosynthesis seems to be controlled primarily by regulation of HisG enzymatic activity. This Methylococcus capsulatus (strain ATCC 33009 / NCIMB 11132 / Bath) protein is ATP phosphoribosyltransferase.